Consider the following 578-residue polypeptide: Putative diflavin flavoprotein A 2 (578 aa).

Residues 39-233 are zinc metallo-hydrolase; it reads QQGTTSNSYL…PPPRLYAPAH (195 aa). The Flavodoxin-like domain maps to 262 to 404; that stretch reads VALFYASAYG…AANEFAQALK (143 aa). A flavodoxin-reductase-like region spans residues 429-578; sequence VNRVVGSLCV…TAIQHRKTSS (150 aa).

In the N-terminal section; belongs to the zinc metallo-hydrolase group 3 family. This sequence in the C-terminal section; belongs to the flavodoxin reductase family. It depends on Fe cation as a cofactor.

Mediates electron transfer from NADH to oxygen, reducing it to water. This modular protein has 3 redox cofactors, in other organisms the same activity requires 2 or 3 proteins. The chain is Putative diflavin flavoprotein A 2 (dfa2) from Thermosynechococcus vestitus (strain NIES-2133 / IAM M-273 / BP-1).